Reading from the N-terminus, the 183-residue chain is BLOC-1-related complex subunit 8 homolog (183 aa).

Residues Met152–His183 form a disordered region. Residues Thr159–His183 show a composition bias toward polar residues.

The protein belongs to the BORCS8 family.

Its subcellular location is the lysosome membrane. May participate in the coupling of lysosomes to microtubule plus-end-directed kinesin motor. The sequence is that of BLOC-1-related complex subunit 8 homolog from Drosophila melanogaster (Fruit fly).